The sequence spans 393 residues: Erythronate-4-phosphate dehydrogenase (393 aa).

2 residues coordinate substrate: serine 57 and threonine 79. Aspartate 159 is an NAD(+) binding site. Arginine 229 is a catalytic residue. An NAD(+)-binding site is contributed by aspartate 253. Glutamate 258 is a catalytic residue. The active-site Proton donor is the histidine 275. Glycine 278 is a binding site for NAD(+). Tyrosine 279 is a substrate binding site.

Belongs to the D-isomer specific 2-hydroxyacid dehydrogenase family. PdxB subfamily. In terms of assembly, homodimer.

It is found in the cytoplasm. It carries out the reaction 4-phospho-D-erythronate + NAD(+) = (R)-3-hydroxy-2-oxo-4-phosphooxybutanoate + NADH + H(+). The protein operates within cofactor biosynthesis; pyridoxine 5'-phosphate biosynthesis; pyridoxine 5'-phosphate from D-erythrose 4-phosphate: step 2/5. Its function is as follows. Catalyzes the oxidation of erythronate-4-phosphate to 3-hydroxy-2-oxo-4-phosphonooxybutanoate. The sequence is that of Erythronate-4-phosphate dehydrogenase from Colwellia psychrerythraea (strain 34H / ATCC BAA-681) (Vibrio psychroerythus).